We begin with the raw amino-acid sequence, 72 residues long: Translation initiation factor IF-1 (72 aa).

The region spanning 1-72 is the S1-like domain; that stretch reads MSKEEAIEVE…TRGRITYRAK (72 aa).

This sequence belongs to the IF-1 family. As to quaternary structure, component of the 30S ribosomal translation pre-initiation complex which assembles on the 30S ribosome in the order IF-2 and IF-3, IF-1 and N-formylmethionyl-tRNA(fMet); mRNA recruitment can occur at any time during PIC assembly.

The protein localises to the cytoplasm. In terms of biological role, one of the essential components for the initiation of protein synthesis. Stabilizes the binding of IF-2 and IF-3 on the 30S subunit to which N-formylmethionyl-tRNA(fMet) subsequently binds. Helps modulate mRNA selection, yielding the 30S pre-initiation complex (PIC). Upon addition of the 50S ribosomal subunit IF-1, IF-2 and IF-3 are released leaving the mature 70S translation initiation complex. The polypeptide is Translation initiation factor IF-1 (Geobacter sulfurreducens (strain ATCC 51573 / DSM 12127 / PCA)).